Consider the following 279-residue polypeptide: Dehydrogenase/reductase SDR family member 4 (279 aa).

Position 37 to 61 (37 to 61 (LVTASTDGIGLAIARRLAQDGAHVV)) interacts with NADP(+). The residue at position 93 (Lys93) is an N6-acetyllysine; alternate. Lys93 carries the post-translational modification N6-succinyllysine; alternate. Position 170 (Ser170) interacts with substrate. The active-site Proton acceptor is the Tyr183. Residue Lys187 participates in NADP(+) binding. Lys217 carries the post-translational modification N6-acetyllysine; alternate. Residue Lys217 is modified to N6-succinyllysine; alternate. Ser221 carries the phosphoserine modification. Lys228 and Lys235 each carry N6-succinyllysine. The Peroxisomal targeting signal signature appears at 277–279 (SRL).

It belongs to the short-chain dehydrogenases/reductases (SDR) family. Homotetramer. Detected in heart, kidney, liver and small intestine. Detected at lower levels in brain, lung, stomach and spleen.

It is found in the peroxisome. It catalyses the reaction a secondary alcohol + NADP(+) = a ketone + NADPH + H(+). The catalysed reaction is 3alpha-hydroxy-5beta-pregnan-20-one + NADP(+) = 5beta-pregnan-3,20-dione + NADPH + H(+). The enzyme catalyses 5beta-dihydrotestosterone + NADPH + H(+) = 5beta-androstane-3alpha,17beta-diol + NADP(+). It carries out the reaction all-trans-retinol + NADP(+) = all-trans-retinal + NADPH + H(+). It catalyses the reaction isatin + NADPH + H(+) = 3-hydroxyindolin-2-one + NADP(+). With respect to regulation, inhibited by kaempferol, quercetin, genistein and myristic acid. In terms of biological role, NADPH-dependent oxidoreductase which catalyzes the reduction of a variety of compounds bearing carbonyl groups including ketosteroids, alpha-dicarbonyl compounds, aldehydes, aromatic ketones and quinones. Reduces all-trans-retinal and 9-cis retinal. Reduces 3-ketosteroids and benzil into 3alpha-hydroxysteroids and S-benzoin, respectively, in contrast to the stereoselectivity of primates DHRS4s which produce 3beta-hydroxysteroids and R-benzoin. In the reverse reaction, catalyzes the NADP-dependent oxidation of 3alpha-hydroxysteroids and alcohol, but with much lower efficiency. Involved in the metabolism of 3alpha-hydroxysteroids, retinoid, isatin and xenobiotic carbonyl compounds. In Sus scrofa (Pig), this protein is Dehydrogenase/reductase SDR family member 4 (DHRS4).